A 284-amino-acid chain; its full sequence is 2-dehydro-3-deoxyphosphooctonate aldolase (284 aa).

Belongs to the KdsA family.

The protein resides in the cytoplasm. The catalysed reaction is D-arabinose 5-phosphate + phosphoenolpyruvate + H2O = 3-deoxy-alpha-D-manno-2-octulosonate-8-phosphate + phosphate. The protein operates within carbohydrate biosynthesis; 3-deoxy-D-manno-octulosonate biosynthesis; 3-deoxy-D-manno-octulosonate from D-ribulose 5-phosphate: step 2/3. Its pathway is bacterial outer membrane biogenesis; lipopolysaccharide biosynthesis. The polypeptide is 2-dehydro-3-deoxyphosphooctonate aldolase (Photorhabdus laumondii subsp. laumondii (strain DSM 15139 / CIP 105565 / TT01) (Photorhabdus luminescens subsp. laumondii)).